The chain runs to 224 residues: Putative ankyrin repeat protein R845 (224 aa).

ANK repeat units follow at residues 1-14 (MVEYLVSLGADVRS), 15-44 (NYDHAIKSAFENGHLQVIKYLISLGSDVSM), 46-74 (YDYILLRASRNGYIDVVKYLIEQGVDPRT), 75-104 (NNDKAVRKASKNGRLEIVEYLVTLGADIRI), 105-134 (DNDSAVRWASKNGHIKTVEFLVAKGADIRA), 136-164 (NDYSLRHSSKHGHIKMVEYLVAQGADVRA), 165-194 (DNDYAIKWASGKGHLEVVKYLVEKGADFRA), and 196-224 (NDCAVKWASQTGRVEIVEYLVSKGAVCPY).

The sequence is that of Putative ankyrin repeat protein R845 from Acanthamoeba polyphaga mimivirus (APMV).